Reading from the N-terminus, the 145-residue chain is Large ribosomal subunit protein uL13 (145 aa).

The protein belongs to the universal ribosomal protein uL13 family. In terms of assembly, part of the 50S ribosomal subunit.

This protein is one of the early assembly proteins of the 50S ribosomal subunit, although it is not seen to bind rRNA by itself. It is important during the early stages of 50S assembly. The polypeptide is Large ribosomal subunit protein uL13 (Bacillus cereus (strain ZK / E33L)).